Here is a 292-residue protein sequence, read N- to C-terminus: Protease HtpX (292 aa).

2 helical membrane-spanning segments follow: residues 5 to 25 and 34 to 54; these read IFLFLLTNLAVLMLAGIVMSL and SGLLVMAAIFGFGGSFISLLL. His140 is a binding site for Zn(2+). The active site involves Glu141. His144 is a binding site for Zn(2+). 2 consecutive transmembrane segments (helical) span residues 155–175 and 193–213; these read LLQGVLNTFVIVLARVVGGII and IIVFALEMVFGLFATMIAMWF. Position 218 (Glu218) interacts with Zn(2+).

The protein belongs to the peptidase M48B family. It depends on Zn(2+) as a cofactor.

It is found in the cell inner membrane. This Xanthomonas euvesicatoria pv. vesicatoria (strain 85-10) (Xanthomonas campestris pv. vesicatoria) protein is Protease HtpX.